The primary structure comprises 898 residues: Transportin-1 (898 aa).

The residue at position 1 (M1) is an N-acetylmethionine. 20 HEAT repeats span residues 19–46, 51–89, 98–131, 137–174, 181–211, 224–251, 263–290, 306–397, 405–433, 445–472, 486–519, 527–560, 568–606, 614–665, 676–707, 715–748, 756–791, 799–832, 841–872, and 875–895; these read GLQQ…QKLE, YPDF…AHFQ, FIKS…KGEL, LLPK…LDSD, NIMI…QFII, FIEN…VMLL, HNIV…FWLT, PKLI…LANV, HILP…GAIA, PELI…TLSR, LKPL…EEEA, LAYI…ADSV, EYIQ…TALQ, EPVY…GLGG, ILTL…KACF, ADFM…IQMG, PMVL…YVCP, QQFI…ISVN, IFFC…KNQV, and ENWR…LAAF. Residues 41–109 enclose the Importin N-terminal domain; it reads VQQKLEQLNQ…KSECLNNIGD (69 aa). The interval 347-374 is disordered; sequence FHRSRTVAQQHDEDGIEEEDDDDDEIDD. Over residues 360–374 the composition is skewed to acidic residues; sequence DGIEEEDDDDDEIDD.

The protein belongs to the importin beta family. Importin beta-2 subfamily. In terms of assembly, identified in a complex that contains TNPO1, RAN and RANBP1. Binds HNRPA1, HNRPA2, HNRNPDL, RPS7, RPL5 and RAN. Interacts with H2A, H2B, H3 and H4 histones. Interacts with isoform 1 and isoform 5 of ADAR/ADAR1 (via DRBM 3 domain). Interacts with SNAI1 (via zinc fingers); the interaction mediates SNAI1 nuclear import. Interacts with SNAI2 (via zinc fingers). Interacts with RPL23A (via BIB domain) and SRP19; this interaction is involved in RPL23A and SRP19 import into the nucleus. Interacts (via HEAT repeats 8-12) with BAP1 (via non-classical PY-NLS); this interaction is direct, is involved in BAP1 nuclear import and disrupts BAP1 homodimerization. (Microbial infection) Binds to HIV-1 Rev.

The protein resides in the cytoplasm. It is found in the nucleus. Functionally, functions in nuclear protein import as nuclear transport receptor. Serves as receptor for nuclear localization signals (NLS) in cargo substrates. May mediate docking of the importin/substrate complex to the nuclear pore complex (NPC) through binding to nucleoporin and the complex is subsequently translocated through the pore by an energy requiring, Ran-dependent mechanism. At the nucleoplasmic side of the NPC, Ran binds to the importin, the importin/substrate complex dissociates and importin is re-exported from the nucleus to the cytoplasm where GTP hydrolysis releases Ran. The directionality of nuclear import is thought to be conferred by an asymmetric distribution of the GTP- and GDP-bound forms of Ran between the cytoplasm and nucleus. Involved in nuclear import of M9-containing proteins. In vitro, binds directly to the M9 region of the heterogeneous nuclear ribonucleoproteins (hnRNP), A1 and A2 and mediates their nuclear import. Involved in hnRNP A1/A2 nuclear export. Mediates the nuclear import of ribosomal proteins RPL23A, RPS7 and RPL5. In vitro, mediates nuclear import of H2A, H2B, H3 and H4 histones. In vitro, mediates nuclear import of SRP19. Mediates nuclear import of ADAR/ADAR1 isoform 1 and isoform 5 in a RanGTP-dependent manner. Main mediator of PR-DUB complex component BAP1 nuclear import; acts redundantly with the karyopherins KPNA1 and KPNA2. In terms of biological role, (Microbial infection) In case of HIV-1 infection, binds and mediates the nuclear import of HIV-1 Rev. This is Transportin-1 (TNPO1) from Homo sapiens (Human).